The sequence spans 425 residues: tRNA(Ile)-lysidine synthase (425 aa).

27-32 (SGGLDS) serves as a coordination point for ATP.

It belongs to the tRNA(Ile)-lysidine synthase family.

Its subcellular location is the cytoplasm. It catalyses the reaction cytidine(34) in tRNA(Ile2) + L-lysine + ATP = lysidine(34) in tRNA(Ile2) + AMP + diphosphate + H(+). Ligates lysine onto the cytidine present at position 34 of the AUA codon-specific tRNA(Ile) that contains the anticodon CAU, in an ATP-dependent manner. Cytidine is converted to lysidine, thus changing the amino acid specificity of the tRNA from methionine to isoleucine. The polypeptide is tRNA(Ile)-lysidine synthase (Streptococcus pneumoniae (strain JJA)).